We begin with the raw amino-acid sequence, 670 residues long: DNA ligase (670 aa).

NAD(+) contacts are provided by residues 33 to 37 (DAEYD), 82 to 83 (SL), and Glu114. Catalysis depends on Lys116, which acts as the N6-AMP-lysine intermediate. NAD(+) is bound by residues Arg137, Glu173, Lys291, and Lys315. The Zn(2+) site is built by Cys409, Cys412, Cys427, and Cys433. The region spanning 592-670 (VQSDRLSGNT…ENALAELLSD (79 aa)) is the BRCT domain.

The protein belongs to the NAD-dependent DNA ligase family. LigA subfamily. Mg(2+) serves as cofactor. Requires Mn(2+) as cofactor.

It catalyses the reaction NAD(+) + (deoxyribonucleotide)n-3'-hydroxyl + 5'-phospho-(deoxyribonucleotide)m = (deoxyribonucleotide)n+m + AMP + beta-nicotinamide D-nucleotide.. In terms of biological role, DNA ligase that catalyzes the formation of phosphodiester linkages between 5'-phosphoryl and 3'-hydroxyl groups in double-stranded DNA using NAD as a coenzyme and as the energy source for the reaction. It is essential for DNA replication and repair of damaged DNA. This Idiomarina loihiensis (strain ATCC BAA-735 / DSM 15497 / L2-TR) protein is DNA ligase.